We begin with the raw amino-acid sequence, 293 residues long: Probable metal transport system membrane protein CPn_0543/CP_0209/CPj0543/CpB0565 (293 aa).

7 helical membrane-spanning segments follow: residues 12 to 32 (LLIL…GGVM), 41 to 61 (IVSI…LTLW), 68 to 88 (LSFF…LCIG), 101 to 121 (LIAM…SRLP), 140 to 160 (PSDL…VVLC), 183 to 203 (LWYF…IYVM), and 253 to 273 (FPVG…SLCV).

The protein belongs to the ABC-3 integral membrane protein family.

It is found in the cell inner membrane. In terms of biological role, part of an ATP-driven transport system CPn_0541/CPn_0542/CPn_0543 for a metal. In Chlamydia pneumoniae (Chlamydophila pneumoniae), this protein is Probable metal transport system membrane protein CPn_0543/CP_0209/CPj0543/CpB0565.